The chain runs to 401 residues: Nicotinate phosphoribosyltransferase (401 aa).

H221 is subject to Phosphohistidine; by autocatalysis.

This sequence belongs to the NAPRTase family. Transiently phosphorylated on a His residue during the reaction cycle. Phosphorylation strongly increases the affinity for substrates and increases the rate of nicotinate D-ribonucleotide production. Dephosphorylation regenerates the low-affinity form of the enzyme, leading to product release.

It carries out the reaction nicotinate + 5-phospho-alpha-D-ribose 1-diphosphate + ATP + H2O = nicotinate beta-D-ribonucleotide + ADP + phosphate + diphosphate. It functions in the pathway cofactor biosynthesis; NAD(+) biosynthesis; nicotinate D-ribonucleotide from nicotinate: step 1/1. Catalyzes the synthesis of beta-nicotinate D-ribonucleotide from nicotinate and 5-phospho-D-ribose 1-phosphate at the expense of ATP. The protein is Nicotinate phosphoribosyltransferase of Serratia proteamaculans (strain 568).